We begin with the raw amino-acid sequence, 193 residues long: dCTP deaminase (193 aa).

Residues 110-115 (RSSLAR), Asp128, 136-138 (VLE), Tyr171, Lys178, and Gln182 contribute to the dCTP site. The Proton donor/acceptor role is filled by Glu138.

The protein belongs to the dCTP deaminase family. Homotrimer.

It catalyses the reaction dCTP + H2O + H(+) = dUTP + NH4(+). It participates in pyrimidine metabolism; dUMP biosynthesis; dUMP from dCTP (dUTP route): step 1/2. In terms of biological role, catalyzes the deamination of dCTP to dUTP. This is dCTP deaminase from Escherichia coli (strain K12 / MC4100 / BW2952).